Reading from the N-terminus, the 408-residue chain is uncharacterized protein (408 aa).

A compositionally biased stretch (polar residues) spans 376–386 (NELNDPNSVYN). A disordered region spans residues 376-408 (NELNDPNSVYNSPEFDHQGDQKKLTEENGCVVQ). Positions 389 to 401 (EFDHQGDQKKLTE) are enriched in basic and acidic residues.

This is an uncharacterized protein from Acanthamoeba polyphaga (Amoeba).